The following is a 358-amino-acid chain: Polyadenylate-binding protein-interacting protein 11 (358 aa).

Residues 1-19 (MAVVETGAAATAADAGGVV) are compositionally biased toward low complexity. Positions 1 to 45 (MAVVETGAAATAADAGGVVIQPPPSSPPSSMTSQDSGVSSDDQNH) are disordered. Residues 31-41 (MTSQDSGVSSD) show a composition bias toward polar residues. The short motif at 92–102 (KLNPMAEEFVP) is the PAM2-like element. Positions 136 to 164 (GGYGNENGGFRRKKSFGQGKRRMNARTSM) are disordered. A compositionally biased stretch (basic residues) spans 145 to 159 (FRRKKSFGQGKRRMN). Residues 146–157 (RRKKSFGQGKRR) carry the Bipartite nuclear localization signal motif. RRM domains follow at residues 173 to 248 (RTVY…PSKT) and 270 to 346 (RTIY…PSKT).

Expressed in cauline leaves, stems, immature siliques and primary inflorescences.

It is found in the nucleus. The polypeptide is Polyadenylate-binding protein-interacting protein 11 (CID11) (Arabidopsis thaliana (Mouse-ear cress)).